We begin with the raw amino-acid sequence, 385 residues long: 3-dehydroquinate synthase (385 aa).

NAD(+) contacts are provided by residues 122–126, 146–147, Lys159, and Lys168; these read GVIGD and TT. Zn(2+)-binding residues include Glu201, His264, and His282.

Belongs to the sugar phosphate cyclases superfamily. Dehydroquinate synthase family. Co(2+) serves as cofactor. Zn(2+) is required as a cofactor. It depends on NAD(+) as a cofactor.

It localises to the cytoplasm. It catalyses the reaction 7-phospho-2-dehydro-3-deoxy-D-arabino-heptonate = 3-dehydroquinate + phosphate. It functions in the pathway metabolic intermediate biosynthesis; chorismate biosynthesis; chorismate from D-erythrose 4-phosphate and phosphoenolpyruvate: step 2/7. In terms of biological role, catalyzes the conversion of 3-deoxy-D-arabino-heptulosonate 7-phosphate (DAHP) to dehydroquinate (DHQ). The sequence is that of 3-dehydroquinate synthase from Rhodospirillum rubrum (strain ATCC 11170 / ATH 1.1.1 / DSM 467 / LMG 4362 / NCIMB 8255 / S1).